Here is a 140-residue protein sequence, read N- to C-terminus: ATP synthase epsilon chain (140 aa).

The protein belongs to the ATPase epsilon chain family. F-type ATPases have 2 components, CF(1) - the catalytic core - and CF(0) - the membrane proton channel. CF(1) has five subunits: alpha(3), beta(3), gamma(1), delta(1), epsilon(1). CF(0) has three main subunits: a, b and c.

The protein localises to the cell inner membrane. Its function is as follows. Produces ATP from ADP in the presence of a proton gradient across the membrane. The polypeptide is ATP synthase epsilon chain (Yersinia enterocolitica serotype O:8 / biotype 1B (strain NCTC 13174 / 8081)).